A 623-amino-acid chain; its full sequence is Protein skinhead-1 (623 aa).

4 disordered regions span residues 1-29 (MGGS…FSSV), 158-184 (TEHP…YEYS), 421-451 (YQST…GSVT), and 467-557 (QRHS…LASD). Ser-164 is modified (phosphoserine; by pmk-1). The span at 173-184 (ERPTTSSRYEYS) shows a compositional bias: polar residues. Ser-430 is modified (phosphoserine; by pmk-1). Low complexity-rich tracts occupy residues 435 to 449 (GSSG…SPGS), 472 to 498 (SDCT…ESST), and 511 to 529 (PSSG…SQSS). A basic motif region spans residues 540–623 (SGQRKRGRQS…DRHDKMSHYI (84 aa)).

It belongs to the bZIP family. Skn1 subfamily. As to quaternary structure, monomer. Interacts with GATA factor elt-3; interaction may enhance transcriptional activation of target genes. In terms of assembly, interacts with pgma-5. Interacts with transcription factor mxl-3 (via N-terminus). In terms of processing, cleaved by the aspartic protease ddi-1. In terms of tissue distribution, postembryonic intestinal cells.

It localises to the nucleus. The protein resides in the cytoplasm. The protein localises to the mitochondrion. In terms of biological role, transcription factor. Required to specify the fate of ventral blastomeres in the early embryo, and postembryonically for the development of the intestine. Directly regulates expression of zygotically expressed med-1 and med-2 to direct mesendoderm development. In response to oxidative stress and anoxia, required to up-regulate expression of stl-1 mRNA. Involved in regulating innate immunity, acting downstream of the pmk-1 p38/MAPK pathway and probably also downstream of nipi-3. Required for the up-regulation of phase II detoxification genes, including gcs-1 and several glutathione-S-transferase mRNAs in response to oxidative stress generated during pathogenic bacterial infection. Modulates oxidative stress responses in concert with transcription factors such as hcf-1 and elt-3. Regulates the transcription of genes associated with metabolism in response to changes in nutrient availability. In neurons, involved in mitochondrial fusion and behavioral recovery during reoxygenation. Required for riok-1 mRNA expression in the intestine. Downstream of the let-60/Ras, mek-2 and pmk-1 pathway, positively regulates lifespan probably by preventing transcription of insulin-like peptides such as ins-39. Prevents degeneration of dopaminergic CEP neurons in response to high Al(3+) or Mn(2+) levels, probably by promoting the expression of glutathione-S-transferase gst-1. Functionally, directed by the ER-associated degradation pathway (ERAD), mediates proteasomal homeostasis by regulating the expression of proteasomal subunits such as rpt-3 to confer resistance to proteasomal dysfunction. The polypeptide is Protein skinhead-1 (skn-1) (Caenorhabditis elegans).